The following is a 61-amino-acid chain: U-scoloptoxin(14)-Sm1a (61 aa).

An N-terminal signal peptide occupies residues 1 to 24 (MNPKLCMLLLVCLMAFYVIETVQA).

This sequence belongs to the scoloptoxin-14 family. Post-translationally, contains 4 disulfide bonds. As to expression, expressed by the venom gland.

The protein resides in the secreted. This chain is U-scoloptoxin(14)-Sm1a, found in Scolopendra morsitans (Tanzanian blue ringleg centipede).